The sequence spans 778 residues: Degenerin deg-1 (778 aa).

Over 1–82 (MSNHHSKTKK…IARNSFSKLM (82 aa)) the chain is Cytoplasmic. A helical transmembrane segment spans residues 83–103 (WGLIIFSFLLMFAYQASKLIF). Topologically, residues 104-711 (KFSAHEKITD…LVNLIADFGG (608 aa)) are extracellular. Residues 154–165 (NAKTHSKSEGEK) show a composition bias toward basic and acidic residues. 2 disordered regions span residues 154 to 180 (NAKT…DASQ) and 201 to 220 (SNKT…QRSI). 4 N-linked (GlcNAc...) asparagine glycosylation sites follow: N202, N209, N272, and N342. A compositionally biased stretch (low complexity) spans 346 to 369 (TSTTTTTTTTPPPTTTSTTTTTTT). The tract at residues 346–380 (TSTTTTTTTTPPPTTTSTTTTTTTTPPPTTTARPN) is disordered. 3 N-linked (GlcNAc...) asparagine glycosylation sites follow: N473, N492, and N606. The helical transmembrane segment at 712–732 (HLGLWLGFSVITVMEVCVLLV) threads the bilayer. Over 733–778 (DMISLFFKSRHEEKLLRQSTKRKDVPEDKRQITVGSGRKSDAFVSI) the chain is Cytoplasmic.

This sequence belongs to the amiloride-sensitive sodium channel (TC 1.A.6) family.

Its subcellular location is the membrane. Probable sodium channel subunit. Required by a subset of neurons. The sequence is that of Degenerin deg-1 from Caenorhabditis elegans.